A 298-amino-acid polypeptide reads, in one-letter code: MEIFADILPLREQIKTWKREGKRIAFIPTMGNLHEGHLTLVRTAREHADIIVASIFVNPMQFNNVDDLTNYPRTIDEDIEKLTSENVDMLFTPTPEVMYPDGLDKQTVVDVPVISTILEGASRPGHFKGVSTVVAKLFNIVQPDVACFGEKDFQQLALIRQMVIDMAMDIDVVGVATVREMDGLAMSSRNNLLTLNERQRSPVLARTMRWISSQMRRGRNDYESLIEDASDQLRAADLQPDEIFIRDARTLQEPTEETTQAVILMAAFLGQVRLIDNLVVELTTAANEEEEEEEEEEK.

An ATP-binding site is contributed by 30–37 (MGNLHEGH). H37 functions as the Proton donor in the catalytic mechanism. Residue Q61 participates in (R)-pantoate binding. A beta-alanine-binding site is contributed by Q61. 149 to 152 (GEKD) contributes to the ATP binding site. Residue Q155 participates in (R)-pantoate binding. Residues V178 and 186 to 189 (MSSR) each bind ATP.

This sequence belongs to the pantothenate synthetase family. As to quaternary structure, homodimer.

Its subcellular location is the cytoplasm. The catalysed reaction is (R)-pantoate + beta-alanine + ATP = (R)-pantothenate + AMP + diphosphate + H(+). It participates in cofactor biosynthesis; (R)-pantothenate biosynthesis; (R)-pantothenate from (R)-pantoate and beta-alanine: step 1/1. Catalyzes the condensation of pantoate with beta-alanine in an ATP-dependent reaction via a pantoyl-adenylate intermediate. This Aliivibrio salmonicida (strain LFI1238) (Vibrio salmonicida (strain LFI1238)) protein is Pantothenate synthetase.